The following is a 60-amino-acid chain: Large ribosomal subunit protein bL32 (60 aa).

Residues 1 to 20 (MAVQKSRKSRSRRDMRRSHH) are compositionally biased toward basic residues. The tract at residues 1-60 (MAVQKSRKSRSRRDMRRSHHHMEVAELSIDATTGEKHRRHHMTKDGFYRGRQLFKASQED) is disordered.

This sequence belongs to the bacterial ribosomal protein bL32 family.

The sequence is that of Large ribosomal subunit protein bL32 from Psychrobacter sp. (strain PRwf-1).